We begin with the raw amino-acid sequence, 159 residues long: Dihydrofolate reductase (159 aa).

The region spanning 1 to 158 (MISLIAALAV…HSYCFEILER (158 aa)) is the DHFR domain. Position 5 (isoleucine 5) interacts with substrate. Residues alanine 7 and 13–19 (VIGMENA) contribute to the NADP(+) site. Aspartate 27 is a substrate binding site. 45–46 (LT) is an NADP(+) binding site. The substrate site is built by arginine 52 and arginine 57. Residues 63 to 64 (SS), lysine 76, and 95 to 102 (GGGRVYEQ) contribute to the NADP(+) site. Threonine 113 contributes to the substrate binding site.

It belongs to the dihydrofolate reductase family.

The enzyme catalyses (6S)-5,6,7,8-tetrahydrofolate + NADP(+) = 7,8-dihydrofolate + NADPH + H(+). It participates in cofactor biosynthesis; tetrahydrofolate biosynthesis; 5,6,7,8-tetrahydrofolate from 7,8-dihydrofolate: step 1/1. Its function is as follows. Key enzyme in folate metabolism. Catalyzes an essential reaction for de novo glycine and purine synthesis, and for DNA precursor synthesis. In Klebsiella aerogenes (Enterobacter aerogenes), this protein is Dihydrofolate reductase (folA).